Reading from the N-terminus, the 88-residue chain is UPF0298 protein Bcer98_2635 (88 aa).

It belongs to the UPF0298 family.

It localises to the cytoplasm. This is UPF0298 protein Bcer98_2635 from Bacillus cytotoxicus (strain DSM 22905 / CIP 110041 / 391-98 / NVH 391-98).